A 290-amino-acid polypeptide reads, in one-letter code: Ribosomal RNA small subunit methyltransferase A (290 aa).

The S-adenosyl-L-methionine site is built by N27, L29, G54, E75, D100, and N125.

It belongs to the class I-like SAM-binding methyltransferase superfamily. rRNA adenine N(6)-methyltransferase family. RsmA subfamily.

Its subcellular location is the cytoplasm. It catalyses the reaction adenosine(1518)/adenosine(1519) in 16S rRNA + 4 S-adenosyl-L-methionine = N(6)-dimethyladenosine(1518)/N(6)-dimethyladenosine(1519) in 16S rRNA + 4 S-adenosyl-L-homocysteine + 4 H(+). Specifically dimethylates two adjacent adenosines (A1518 and A1519) in the loop of a conserved hairpin near the 3'-end of 16S rRNA in the 30S particle. May play a critical role in biogenesis of 30S subunits. The chain is Ribosomal RNA small subunit methyltransferase A from Streptococcus pneumoniae (strain ATCC 700669 / Spain 23F-1).